We begin with the raw amino-acid sequence, 106 residues long: uncharacterized protein (106 aa).

This sequence belongs to the SUI1 family.

This is an uncharacterized protein from Haemophilus influenzae (strain ATCC 51907 / DSM 11121 / KW20 / Rd).